A 351-amino-acid chain; its full sequence is Homeobox protein rough sheath 1 (351 aa).

Disordered stretches follow at residues 1–23 (MDQS…NSKA), 57–82 (AAAP…GAEM), and 187–229 (GGGS…PRAE). The segment covering 57 to 68 (AAAPSSSQQHQQ) has biased composition (low complexity). Basic and acidic residues predominate over residues 214-229 (PNGRENDPPEIDPRAE). Residues 232–252 (ELKYQLLKKYSGYLSSLRQEF) form the ELK domain. Positions 253–316 (SKKKKKGKLP…NQRKRHWKPS (64 aa)) form a DNA-binding region, homeobox; TALE-type.

It belongs to the TALE/KNOX homeobox family.

It is found in the nucleus. Its function is as follows. Plays a possible role in patterning the placement of lateral organs along the axis of the shoot. Mutations in RS1 alters cell fate and causes unregulated cell division and expansion in the leaf. Probably binds to the DNA sequence 5'-TGAC-3'. The polypeptide is Homeobox protein rough sheath 1 (RS1) (Zea mays (Maize)).